Reading from the N-terminus, the 391-residue chain is MFKVKFYIRHAVLLLCGSLIVGCSAIPSSGPSAKKIVSLGQQSEVQIPEVELIDVNHTVAQLLYKAQINQSFTQFGDGYASAGTLNIGDVLDIMIWEAPPAVLFGGGLSSMGSGSAHQTKLPEQLVTARGTVSVPFVGDISVVGKTPGQVQEIIKGRLKKMANQPQVMVRLVQNNAANVSVIRAGNSVRMPLTAAGERVLDAVAAVGGSTANVQDTNVQLTRGNVVRTVALEDLVANPRQNILLRRGDVVTMITNPYTFTSMGAVGRTQEIGFSARGLSLSEAIGRMGGLQDRRSDARGVFVFRYTPLVELPAERQDKWIAQGYGSEAEIPTVYRVNMADAHSLFSMQRFPVKNKDVLYVSNAPLAEVQKFLSFVFSPVTSGANSINNLTN.

The first 22 residues, 1–22 (MFKVKFYIRHAVLLLCGSLIVG), serve as a signal peptide directing secretion. C23 carries the N-palmitoyl cysteine lipid modification. C23 carries the S-diacylglycerol cysteine lipid modification. The Periplasmic segment spans residues 23-33 (CSAIPSSGPSA). The beta stranded transmembrane segment at 34–43 (KKIVSLGQQS) threads the bilayer. Topologically, residues 44–57 (EVQIPEVELIDVNH) are extracellular. Residues 58 to 67 (TVAQLLYKAQ) traverse the membrane as a beta stranded segment. The Periplasmic portion of the chain corresponds to 68–83 (INQSFTQFGDGYASAG). Residues 84-93 (TLNIGDVLDI) traverse the membrane as a beta stranded segment. At 94–117 (MIWEAPPAVLFGGGLSSMGSGSAH) the chain is on the extracellular side. Residues 118-127 (QTKLPEQLVT) traverse the membrane as a beta stranded segment. The Periplasmic segment spans residues 128-135 (ARGTVSVP). A beta stranded membrane pass occupies residues 136-145 (FVGDISVVGK). The Extracellular portion of the chain corresponds to 146 to 148 (TPG). The chain crosses the membrane as a beta stranded span at residues 149-158 (QVQEIIKGRL). The Periplasmic segment spans residues 159 to 161 (KKM). Residues 162–171 (ANQPQVMVRL) form a beta stranded membrane-spanning segment. The Extracellular segment spans residues 172–178 (VQNNAAN). Residues 179 to 188 (VSVIRAGNSV) traverse the membrane as a beta stranded segment. At 189 to 391 (RMPLTAAGER…GANSINNLTN (203 aa)) the chain is on the periplasmic side.

The protein belongs to the BexD/CtrA/VexA family.

It localises to the cell outer membrane. In terms of biological role, involved in transport of capsular polysaccharides to the cell surface. May function as a membrane anchor for capsular polysaccharides. Possible porin properties. The protein is Capsule polysaccharide export outer membrane protein CtrA (ctrA) of Neisseria meningitidis serogroup B (strain ATCC BAA-335 / MC58).